The sequence spans 734 residues: MEQKEFDIKNILLKIEKDKNETSKKIQEKYKDCTIEDLEKSLRIQNKKSEEITFISKKIEELNEKLIVEKYKPLLSSSNNSNEIENEISPKIKEILIKNSILKNENSAVSPSITTTDASASLSFGGKTIVLPSNQPTTLRKSDAPADTKHIKLEITNDNKINIIWQDAKNYQSKDWVALYNYKYAPPDGYVNNTWYWAGNKTSGKVETGVTYDANRTQQVRYYNYQNELISQYTVESQCWIDIHGDLGSGLQVNWPNYSTSGSNDIIAIHNSNFGEPKDLANSIEQCYANKNDGDWVSEIINCGLPYYAVYWSNIGGGNYIKQACSKPMTPVDRKLAIGEYYNGEDSYNTSVAAFYDSRANDDKDYIMVTLKEVDQPGTPGYNAKAANGIVLSSNHSSYNDTLYFWGTYCSFDNETGKFYIRQKSCALEYRKWITDNYSKLKDRKVRNLVLPGSHDSATYFINSLSPKSPDADHYKYPDYLLTPWSKTQTCSVYKQLCFGVRYFDLRVARLKDKLYIIHNFYSDSVKQVLKDILQYVSENVNEVIILHWSHLYLVDEDNKLLMKMIIEILGKFMSNSNKGPDVKVGDLAGTPIICIYDDLVNPLSNGGAGGNGKRPDIRDPRLWDPSCISSPYETSRYHSFESILKFLKSRINVPKRKVLHVCQAILTIEFSYEFFGHDLITWTVEHRNKFNEFFNDLETFASPTNIIMTDFVTFYPLSSYCIRRNTLEFNNSN.

Positions isoleucine 8–lysine 70 form a coiled coil. The PI-PLC X-box domain maps to lysine 440–leucine 604.

In Dictyostelium discoideum (Social amoeba), this protein is PI-PLC X-box domain-containing protein DDB_G0293730.